The chain runs to 622 residues: Phosphomethylpyrimidine synthase (622 aa).

A disordered region spans residues 109–130 (EPISNNNNDRQSSDKQLSFTTN). Residues N234, M263, Y292, H328, 348 to 350 (SRG), 389 to 392 (DGLR), and E428 contribute to the substrate site. H432 provides a ligand contact to Zn(2+). Y455 is a substrate binding site. H496 serves as a coordination point for Zn(2+). The [4Fe-4S] cluster site is built by C576, C579, and C584.

Belongs to the ThiC family. In terms of assembly, homodimer. The cofactor is [4Fe-4S] cluster.

The enzyme catalyses 5-amino-1-(5-phospho-beta-D-ribosyl)imidazole + S-adenosyl-L-methionine = 4-amino-2-methyl-5-(phosphooxymethyl)pyrimidine + CO + 5'-deoxyadenosine + formate + L-methionine + 3 H(+). It functions in the pathway cofactor biosynthesis; thiamine diphosphate biosynthesis. Its function is as follows. Catalyzes the synthesis of the hydroxymethylpyrimidine phosphate (HMP-P) moiety of thiamine from aminoimidazole ribotide (AIR) in a radical S-adenosyl-L-methionine (SAM)-dependent reaction. This Baumannia cicadellinicola subsp. Homalodisca coagulata protein is Phosphomethylpyrimidine synthase.